The following is a 253-amino-acid chain: tRNA uridine(34) hydroxylase (253 aa).

Positions H127–Y221 constitute a Rhodanese domain. The active-site Cysteine persulfide intermediate is C181.

Belongs to the TrhO family.

The enzyme catalyses uridine(34) in tRNA + AH2 + O2 = 5-hydroxyuridine(34) in tRNA + A + H2O. Its function is as follows. Catalyzes oxygen-dependent 5-hydroxyuridine (ho5U) modification at position 34 in tRNAs. This chain is tRNA uridine(34) hydroxylase, found in Xanthomonas campestris pv. campestris (strain B100).